The following is a 179-amino-acid chain: MLTRAKKEQLVQEMTDRFSKASLILFTDYKGMDVQTISELRGQLYEKFEDKARYQVAKNTLIRLALRNASYEEEEWKEQVTGTTAILTIVDADPIEAIKIVYDFSKKKKLPVLRGCYLEKVFHDESKIPDLAQLPSREQLIAMVVSGFAAPISGLVYSLNGIISKLVYALNAIKDKKSE.

Belongs to the universal ribosomal protein uL10 family. In terms of assembly, part of the ribosomal stalk of the 50S ribosomal subunit. The N-terminus interacts with L11 and the large rRNA to form the base of the stalk. The C-terminus forms an elongated spine to which L12 dimers bind in a sequential fashion forming a multimeric L10(L12)X complex.

Functionally, forms part of the ribosomal stalk, playing a central role in the interaction of the ribosome with GTP-bound translation factors. This is Large ribosomal subunit protein uL10 from Kosmotoga olearia (strain ATCC BAA-1733 / DSM 21960 / TBF 19.5.1).